Consider the following 776-residue polypeptide: Rho guanine nucleotide exchange factor 6 (776 aa).

Residues 1–111 (MNPEEQIVTW…TLLAVNKATE (111 aa)) enclose the Calponin-homology (CH) domain. The interval 115–151 (SERPCGRSSSLSAANTSQTNPQGAVSSTVSGLQRQSK) is disordered. A compositionally biased stretch (polar residues) spans 121–151 (RSSSLSAANTSQTNPQGAVSSTVSGLQRQSK). Position 126 is a phosphoserine (serine 126). Residue threonine 133 is modified to Phosphothreonine. Phosphoserine is present on residues serine 144 and serine 150. One can recognise an SH3 domain in the interval 160–219 (SHQLIVKARFNFKQTNEDELSVCKGDIIYVTRVEEGGWWEGTLNGRTGWFPSNYVREIKS). Serine 225 bears the Phosphoserine mark. The DH domain occupies 241 to 421 (YYTVVLQNIL…KTLMGQCQDL (181 aa)). The 106-residue stretch at 443–548 (DIKNLGNVIF…WLEQLNRLIR (106 aa)) folds into the PH domain. Position 488 is a phosphoserine (serine 488). Low complexity predominate over residues 561–572 (SSSCSAHSSFSS). The tract at residues 561–581 (SSSCSAHSSFSSTGQPRGPLE) is disordered. Serine 640 and serine 684 each carry phosphoserine.

Interacts with PAK kinases through the SH3 domain. Interacts with GIT1. Component of cytoplasmic complexes, which also contain PXN, GIT1 and PAK1. Interacts with PARVB. Interacts with BIN2. Identified in a complex with BIN2 and GIT2. Interacts with PARVG; the guanine nucleotide exchange factor activity of ARHGEF6 is essential for PARVG-induced enhancement of cell spreading. In terms of tissue distribution, ubiquitous.

It localises to the cell projection. The protein resides in the lamellipodium. In terms of biological role, acts as a RAC1 guanine nucleotide exchange factor (GEF). This Homo sapiens (Human) protein is Rho guanine nucleotide exchange factor 6 (ARHGEF6).